The chain runs to 265 residues: MAATAAAALAVTDELALPLRAVGDLAAAAGVSREEVVVITQCASLGGKLPFADASVGSVLAVIKKVENLGNQFITEISRVLKAGGMVLVQSSPSDQDPNNSIERKLLLGGFVDVQASAASSQDNEHSVNIKAKKASWSMGSSFPLKKATKGLPKIQIDDDSELIDEDSLLTEDDLKKPELPVVGDCEVGATRKACKNCTCGRAEAEEKVEKLNLTSEQINNPQSACGNCGLGDAFRCGTCPYRGLPAFKPGEKIALPGNFLAADM.

The interval 1–143 is N-terminal SAM-like domain; sequence MAATAAAALA…KASWSMGSSF (143 aa). The interval 144–175 is linker; that stretch reads PLKKATKGLPKIQIDDDSELIDEDSLLTEDDL. [2Fe-2S] cluster-binding residues include Cys-186, Cys-195, Cys-198, and Cys-200. The interval 186–200 is fe-S binding site A; the sequence is CEVGATRKACKNCTC. [4Fe-4S] cluster is bound by residues Cys-226, Cys-229, Cys-237, and Cys-240. 2 consecutive short sequence motifs (cx2C motif) follow at residues 226-229 and 237-240; these read CGNC and CGTC. The fe-S binding site B stretch occupies residues 226-240; sequence CGNCGLGDAFRCGTC.

It belongs to the anamorsin family. As to quaternary structure, monomer. [2Fe-2S] cluster is required as a cofactor. [4Fe-4S] cluster serves as cofactor.

It is found in the cytoplasm. Its subcellular location is the mitochondrion intermembrane space. Functionally, component of the cytosolic iron-sulfur (Fe-S) protein assembly (CIA) machinery. Required for the maturation of extramitochondrial Fe-S proteins. Part of an electron transfer chain functioning in an early step of cytosolic Fe-S biogenesis, facilitating the de novo assembly of a [4Fe-4S] cluster on the cytosolic Fe-S scaffold complex. Electrons are transferred from NADPH via a FAD- and FMN-containing diflavin oxidoreductase. Together with the diflavin oxidoreductase, also required for the assembly of the diferric tyrosyl radical cofactor of ribonucleotide reductase (RNR), probably by providing electrons for reduction during radical cofactor maturation in the catalytic small subunit. In Oryza sativa subsp. indica (Rice), this protein is Anamorsin homolog 1.